The sequence spans 126 residues: Protein ApaG (126 aa).

One can recognise an ApaG domain in the interval 2–126 (SALDTSIRVE…FRLTTPGLLH (125 aa)).

This is Protein ApaG from Shewanella baltica (strain OS195).